The chain runs to 137 residues: Nucleoside diphosphate kinase (137 aa).

6 residues coordinate ATP: K9, F58, R86, T92, R103, and N113. The Pros-phosphohistidine intermediate role is filled by H121.

Belongs to the NDK family. In terms of assembly, homotetramer. The cofactor is Mg(2+).

It is found in the cytoplasm. It carries out the reaction a 2'-deoxyribonucleoside 5'-diphosphate + ATP = a 2'-deoxyribonucleoside 5'-triphosphate + ADP. The catalysed reaction is a ribonucleoside 5'-diphosphate + ATP = a ribonucleoside 5'-triphosphate + ADP. Functionally, major role in the synthesis of nucleoside triphosphates other than ATP. The ATP gamma phosphate is transferred to the NDP beta phosphate via a ping-pong mechanism, using a phosphorylated active-site intermediate. The protein is Nucleoside diphosphate kinase of Streptococcus pneumoniae (strain Hungary19A-6).